The sequence spans 556 residues: Arginine--tRNA ligase 2 (556 aa).

A 'HIGH' region motif is present at residues 132–142 (ANPTGDLHLGH).

It belongs to the class-I aminoacyl-tRNA synthetase family. Monomer.

The protein resides in the cytoplasm. The enzyme catalyses tRNA(Arg) + L-arginine + ATP = L-arginyl-tRNA(Arg) + AMP + diphosphate. In Bacillus thuringiensis subsp. konkukian (strain 97-27), this protein is Arginine--tRNA ligase 2.